The primary structure comprises 476 residues: Probable periplasmic serine endoprotease DegP-like (476 aa).

Positions 1-27 (MSIPRLKSYFTILATVLVLGQAVSAQA) are cleaved as a signal peptide. Active-site charge relay system residues include histidine 116, aspartate 146, and serine 219. Substrate contacts are provided by residues 217-219 (GNS) and 274-278 (LGVVI). PDZ domains lie at 263-354 (LKTG…IRDG) and 360-465 (ELTV…LRQG).

It belongs to the peptidase S1C family.

The protein localises to the periplasm. The catalysed reaction is Acts on substrates that are at least partially unfolded. The cleavage site P1 residue is normally between a pair of hydrophobic residues, such as Val-|-Val.. Functionally, might be efficient in the degradation of transiently denatured and unfolded proteins which accumulate in the periplasm following stress conditions. The polypeptide is Probable periplasmic serine endoprotease DegP-like (mucD) (Pseudomonas fluorescens (strain ATCC BAA-477 / NRRL B-23932 / Pf-5)).